We begin with the raw amino-acid sequence, 31 residues long: Cytochrome b6-f complex subunit 6 (31 aa).

The chain crosses the membrane as a helical span at residues 4–24 (ITSYFGFLLAALTITSAIFIG).

It belongs to the PetL family. The 4 large subunits of the cytochrome b6-f complex are cytochrome b6, subunit IV (17 kDa polypeptide, PetD), cytochrome f and the Rieske protein, while the 4 small subunits are PetG, PetL, PetM and PetN. The complex functions as a dimer.

The protein resides in the plastid. The protein localises to the chloroplast thylakoid membrane. Functionally, component of the cytochrome b6-f complex, which mediates electron transfer between photosystem II (PSII) and photosystem I (PSI), cyclic electron flow around PSI, and state transitions. PetL is important for photoautotrophic growth as well as for electron transfer efficiency and stability of the cytochrome b6-f complex. This is Cytochrome b6-f complex subunit 6 from Ficus carica (Common fig).